A 185-amino-acid chain; its full sequence is Photosystem I assembly protein Ycf4 (185 aa).

The next 2 membrane-spanning stretches (helical) occupy residues F22–S42 and I57–S77.

It belongs to the Ycf4 family.

It localises to the plastid. Its subcellular location is the chloroplast thylakoid membrane. Its function is as follows. Seems to be required for the assembly of the photosystem I complex. This chain is Photosystem I assembly protein Ycf4, found in Welwitschia mirabilis (Tree tumbo).